We begin with the raw amino-acid sequence, 434 residues long: Nicotinate phosphoribosyltransferase (434 aa).

Position 242 is a phosphohistidine; by autocatalysis (histidine 242).

This sequence belongs to the NAPRTase family. In terms of processing, transiently phosphorylated on a His residue during the reaction cycle. Phosphorylation strongly increases the affinity for substrates and increases the rate of nicotinate D-ribonucleotide production. Dephosphorylation regenerates the low-affinity form of the enzyme, leading to product release.

The enzyme catalyses nicotinate + 5-phospho-alpha-D-ribose 1-diphosphate + ATP + H2O = nicotinate beta-D-ribonucleotide + ADP + phosphate + diphosphate. Its pathway is cofactor biosynthesis; NAD(+) biosynthesis; nicotinate D-ribonucleotide from nicotinate: step 1/1. In terms of biological role, catalyzes the synthesis of beta-nicotinate D-ribonucleotide from nicotinate and 5-phospho-D-ribose 1-phosphate at the expense of ATP. This is Nicotinate phosphoribosyltransferase from Rhizobium rhizogenes (strain K84 / ATCC BAA-868) (Agrobacterium radiobacter).